A 311-amino-acid chain; its full sequence is tRNA-cytidine(32) 2-sulfurtransferase (311 aa).

Residues 47–52 (SGGKDS) carry the PP-loop motif motif. The [4Fe-4S] cluster site is built by C122, C125, and C213.

It belongs to the TtcA family. Homodimer. The cofactor is Mg(2+). Requires [4Fe-4S] cluster as cofactor.

Its subcellular location is the cytoplasm. The catalysed reaction is cytidine(32) in tRNA + S-sulfanyl-L-cysteinyl-[cysteine desulfurase] + AH2 + ATP = 2-thiocytidine(32) in tRNA + L-cysteinyl-[cysteine desulfurase] + A + AMP + diphosphate + H(+). It functions in the pathway tRNA modification. In terms of biological role, catalyzes the ATP-dependent 2-thiolation of cytidine in position 32 of tRNA, to form 2-thiocytidine (s(2)C32). The sulfur atoms are provided by the cysteine/cysteine desulfurase (IscS) system. This is tRNA-cytidine(32) 2-sulfurtransferase from Salmonella typhi.